An 853-amino-acid polypeptide reads, in one-letter code: Dynamin-A (853 aa).

In terms of domain architecture, Dynamin-type G spans 22-296 (PLDLPQIVVV…LMFHIRDTLP (275 aa)). A G1 motif region spans residues 32–39 (GSQSSGKS). 32–40 (GSQSSGKSS) is a GTP binding site. The tract at residues 58–60 (VTR) is G2 motif. Residues 138–141 (DLPG) are G3 motif. The interval 207–210 (TKLD) is G4 motif. Residues 207 to 213 (TKLDLMD) and 238 to 241 (NRSQ) contribute to the GTP site. The tract at residues 237-240 (INRS) is G5 motif. 2 stretches are compositionally biased toward low complexity: residues 523–569 (DQYQ…QQNQ) and 590–607 (PAQQQPNQQPNQLNKGPQ). Residues 523–738 (DQYQQQQQQQ…RYQDDFYGRG (216 aa)) are disordered. The segment covering 610–624 (PPNQSKPSSIPQNGP) has biased composition (polar residues). 2 stretches are compositionally biased toward low complexity: residues 625–635 (NNNNNNNNNNN) and 664–728 (NNSN…SSYN). The GED domain maps to 762–853 (TELIRELLIS…IINEIRDFRN (92 aa)).

The protein belongs to the TRAFAC class dynamin-like GTPase superfamily. Dynamin/Fzo/YdjA family.

It is found in the cytoplasm. Functionally, function in membrane trafficking processes along the endo-lysosomal pathway. This chain is Dynamin-A (dymA), found in Dictyostelium discoideum (Social amoeba).